The sequence spans 156 residues: ATP synthase subunit b (156 aa).

The chain crosses the membrane as a helical span at residues 7-27; sequence LFAQLVVFFILAWFTMKFVWP.

Belongs to the ATPase B chain family. F-type ATPases have 2 components, F(1) - the catalytic core - and F(0) - the membrane proton channel. F(1) has five subunits: alpha(3), beta(3), gamma(1), delta(1), epsilon(1). F(0) has four main subunits: a(1), b(2) and c(10-14). The alpha and beta chains form an alternating ring which encloses part of the gamma chain. F(1) is attached to F(0) by a central stalk formed by the gamma and epsilon chains, while a peripheral stalk is formed by the delta and b chains.

The protein localises to the cell inner membrane. Functionally, f(1)F(0) ATP synthase produces ATP from ADP in the presence of a proton or sodium gradient. F-type ATPases consist of two structural domains, F(1) containing the extramembraneous catalytic core and F(0) containing the membrane proton channel, linked together by a central stalk and a peripheral stalk. During catalysis, ATP synthesis in the catalytic domain of F(1) is coupled via a rotary mechanism of the central stalk subunits to proton translocation. Component of the F(0) channel, it forms part of the peripheral stalk, linking F(1) to F(0). The polypeptide is ATP synthase subunit b (Methylibium petroleiphilum (strain ATCC BAA-1232 / LMG 22953 / PM1)).